A 215-amino-acid polypeptide reads, in one-letter code: Ras-related protein Rab-5A (215 aa).

GTP is bound by residues S29, A30, G32, K33, S34, S35, H46, E47, T52, and G78. Residue S34 coordinates Mg(2+). 2 short sequence motifs (switch) span residues 44 to 56 (QFHEFQESTIGAA) and 77 to 93 (AGQERYHSLAPMYYRGA). T52 contacts Mg(2+). S84 bears the Phosphoserine mark. The GTP site is built by N133, K134, D136, A164, and K165. Residues 181–215 (LPKNEPQNPGANSARGRGVDLTEPTQPTRSQCCSN) form a disordered region. Over residues 203 to 215 (EPTQPTRSQCCSN) the composition is skewed to polar residues. 2 S-geranylgeranyl cysteine lipidation sites follow: C212 and C213.

It belongs to the small GTPase superfamily. Rab family. In terms of assembly, interacts with GDI1; this promotes dissociation from membranes; phosphorylation at Ser-84 disrupts this interaction. Interacts with GDI2; phosphorylation at Ser-84 disrupts the interaction. Binds EEA1. Interacts with ALS2CL, SUN2, ZFYVE20 and RUFY1. Interacts with RIN1 and GAPVD1, which regulate its pathway, probably by acting as a GEF. Interacts with SGSM1 and SGSM3. Interacts with PIK3CB. Interacts with RABEP1 and RINL. Interacts with OCRL and INPP5F. May be a component of a complex composed of RAB5A, DYN2 and PIK3C3. Does not interact with the BLOC-3 complex (heterodimer of HPS1 and HPS4). Interacts with CLN5. Interacts with APPL2. Interacts with F8A1/F8A2/F8A3. Found in a complex with F8A1/F8A2/F8A3, HTT and RAB5A; mediates the recruitment of HTT by RAB5A onto early endosomes. Interacts with ATP9A. Interacts with PPP1R21; mediates the recruitment of FERRY complex by RAB5A onto early endosomes. Mg(2+) serves as cofactor. Post-translationally, phosphorylation of Ser-84 in the switch II region by LRRK2 prevents the association of RAB regulatory proteins, including RAB GDP dissociation inhibitors GDI1 and GDI2.

Its subcellular location is the cell membrane. It localises to the early endosome membrane. It is found in the melanosome. The protein resides in the cytoplasmic vesicle. The protein localises to the cell projection. Its subcellular location is the ruffle. It localises to the cytoplasm. It is found in the cytosol. The protein resides in the membrane. The protein localises to the phagosome membrane. Its subcellular location is the endosome membrane. It carries out the reaction GTP + H2O = GDP + phosphate + H(+). Its activity is regulated as follows. Regulated by guanine nucleotide exchange factors (GEFs) including RINL, which promote the exchange of bound GDP for free GTP. Regulated by GTPase activating proteins (GAPs) which increase the GTP hydrolysis activity. Inhibited by GDP dissociation inhibitors (GDIs). In terms of biological role, the small GTPases Rab are key regulators of intracellular membrane trafficking, from the formation of transport vesicles to their fusion with membranes. Rabs cycle between an inactive GDP-bound form and an active GTP-bound form that is able to recruit to membranes different sets of downstream effectors directly responsible for vesicle formation, movement, tethering and fusion. RAB5A is required for the fusion of plasma membranes and early endosomes. Contributes to the regulation of filopodia extension. Required for the exosomal release of SDCBP, CD63, PDCD6IP and syndecan. Regulates maturation of apoptotic cell-containing phagosomes, probably downstream of DYN2 and PIK3C3. In Canis lupus familiaris (Dog), this protein is Ras-related protein Rab-5A (RAB5A).